Reading from the N-terminus, the 1442-residue chain is Protein patched homolog 1 (1442 aa).

The segment at methionine 1–alanine 45 is disordered. The Cytoplasmic segment spans residues methionine 1–lysine 101. Basic residues predominate over residues arginine 28–glycine 39. A helical membrane pass occupies residues phenylalanine 102–glutamate 122. Over threonine 123–aspartate 436 the chain is Extracellular. Residues asparagine 141, asparagine 312, asparagine 349, and asparagine 414 are each glycosylated (N-linked (GlcNAc...) asparagine). The chain crosses the membrane as a helical span at residues valine 437–methionine 457. An SSD domain is found at serine 438 to methionine 598. The Cytoplasmic segment spans residues leucine 458–alanine 472. Residues glycine 473 to isoleucine 493 traverse the membrane as a helical segment. Residues serine 494 to glutamine 501 lie on the Extracellular side of the membrane. The chain crosses the membrane as a helical span at residues valine 502–phenylalanine 522. Over serine 523–serine 547 the chain is Cytoplasmic. The helical transmembrane segment at valine 548–proline 568 threads the bilayer. Residues alanine 569–alanine 577 lie on the Extracellular side of the membrane. Residues alanine 578 to methionine 598 form a helical membrane-spanning segment. Topologically, residues aspartate 599–lysine 747 are cytoplasmic. A helical membrane pass occupies residues alanine 748–threonine 768. The Extracellular segment spans residues arginine 769 to tryptophan 1026. Asparagine 827, asparagine 874, and asparagine 999 each carry an N-linked (GlcNAc...) asparagine glycan. A helical membrane pass occupies residues leucine 1027–leucine 1047. Residues asparagine 1048–glycine 1053 lie on the Cytoplasmic side of the membrane. A helical membrane pass occupies residues isoleucine 1054–glycine 1074. Topologically, residues isoleucine 1075–valine 1082 are extracellular. Residues valine 1083 to leucine 1101 traverse the membrane as a helical segment. Topologically, residues alanine 1102–histidine 1120 are cytoplasmic. A helical membrane pass occupies residues methionine 1121–glycine 1141. Over serine 1142–alanine 1153 the chain is Extracellular. A helical transmembrane segment spans residues valine 1154 to leucine 1174. The Cytoplasmic portion of the chain corresponds to serine 1175 to glutamate 1442. 2 disordered regions span residues glycine 1188–serine 1231 and serine 1266–lysine 1338. Residues serine 1217–serine 1226 show a composition bias toward low complexity. Over residues glutamine 1276 to tryptophan 1293 the composition is skewed to polar residues.

This sequence belongs to the patched family. In terms of processing, glycosylation is necessary for SHH binding. Expression is seen in the embryonic neural tube, sclerotome, visceral mesoderm, and limb bud.

The protein localises to the membrane. Acts as a receptor for sonic hedgehog (SHH), indian hedgehog (IHH) and desert hedgehog (DHH). Associates with the smoothened protein (SMO) to transduce the hedgehog's proteins signal. This is Protein patched homolog 1 (PTCH1) from Gallus gallus (Chicken).